Reading from the N-terminus, the 308-residue chain is Olfactory receptor 6F1 (308 aa).

The Extracellular portion of the chain corresponds to 1-25 (MDTGNKTLPQDFLLLGFPGSQTLQL). A glycan (N-linked (GlcNAc...) asparagine) is linked at N5. A helical membrane pass occupies residues 26 to 46 (SLFMLFLVMYILTVSGNVAIL). The Cytoplasmic portion of the chain corresponds to 47–54 (MLVSTSHQ). A helical membrane pass occupies residues 55–75 (LHTPMYFFLSNLSFLEIWYTT). Topologically, residues 76 to 99 (AAVPKALAILLGRSQTISFTSCLL) are extracellular. Residues C97 and C189 are joined by a disulfide bond. A helical transmembrane segment spans residues 100–120 (QMYFVFSLGCTEYFLLAAMAY). The Cytoplasmic portion of the chain corresponds to 121-139 (DRCLAICYPLHYGAIMSSL). A helical membrane pass occupies residues 140-160 (LSAQLALGSWVCGFVAIAVPT). The Extracellular portion of the chain corresponds to 161-197 (ALISGLSFCGPRAINHFFCDIAPWIALACTNTQAVEL). The chain crosses the membrane as a helical span at residues 198–217 (VAFVIAVVVILSSCLITFVS). Residues 218 to 237 (YVYIISTILRIPSASGRSKA) lie on the Cytoplasmic side of the membrane. A helical membrane pass occupies residues 238-258 (FSTCSSHLTVVLIWYGSTVFL). At 259–271 (HVRTSIKDALDLI) the chain is on the extracellular side. Residues 272–292 (KAVHVLNTVVTPVLNPFIYTL) traverse the membrane as a helical segment. At 293–308 (RNKEVRETLLKKWKGK) the chain is on the cytoplasmic side.

The protein belongs to the G-protein coupled receptor 1 family.

It localises to the cell membrane. In terms of biological role, odorant receptor. This chain is Olfactory receptor 6F1 (OR6F1), found in Homo sapiens (Human).